Consider the following 208-residue polypeptide: FMN-dependent NADH:quinone oxidoreductase (208 aa).

FMN contacts are provided by residues 17 to 19 (SNS), 99 to 102 (MWNL), and 143 to 146 (SRGG).

Belongs to the azoreductase type 1 family. Homodimer. FMN is required as a cofactor.

It catalyses the reaction 2 a quinone + NADH + H(+) = 2 a 1,4-benzosemiquinone + NAD(+). It carries out the reaction N,N-dimethyl-1,4-phenylenediamine + anthranilate + 2 NAD(+) = 2-(4-dimethylaminophenyl)diazenylbenzoate + 2 NADH + 2 H(+). In terms of biological role, quinone reductase that provides resistance to thiol-specific stress caused by electrophilic quinones. Also exhibits azoreductase activity. Catalyzes the reductive cleavage of the azo bond in aromatic azo compounds to the corresponding amines. The sequence is that of FMN-dependent NADH:quinone oxidoreductase from Staphylococcus aureus (strain bovine RF122 / ET3-1).